Here is a 267-residue protein sequence, read N- to C-terminus: Undecaprenyl-diphosphatase (267 aa).

Helical transmembrane passes span 7–29 (LILGIIEGLTEFLPVSSTGHMIL), 41–61 (FWKSFLIIIQLGSILAVIFVF), 69–89 (LDIWLKLAAGFFPTGVIGLFV), 96–116 (LFNGWVVVGMLIFGGVVFILI), 173–193 (AAEFSFLLAIPTMIIATAYSI), 207–227 (IPLGIGFITAFVVAVLVIKFF), and 239–259 (FGIYRIILGFVFFYLYYSGIL).

Belongs to the UppP family.

Its subcellular location is the cell inner membrane. It carries out the reaction di-trans,octa-cis-undecaprenyl diphosphate + H2O = di-trans,octa-cis-undecaprenyl phosphate + phosphate + H(+). Functionally, catalyzes the dephosphorylation of undecaprenyl diphosphate (UPP). Confers resistance to bacitracin. This is Undecaprenyl-diphosphatase from Campylobacter jejuni subsp. jejuni serotype O:6 (strain 81116 / NCTC 11828).